The following is a 776-amino-acid chain: MASLIYRQLLANSYAVDLSDEIQSVGSEKNQRVTVNPGPFAQTVYAPVNWGPGEVNDSTVVQPVLDGPYQPASFDLPVGNWMLLAPTGPGVVVEGTDNSGRWLSVILIEPGVTSETRTYTMFGSSKQVLVSNASDTKWKFVEMMKTAIDGDYAEWGTLLSDTKLYGMMKYGKRLFIYEGETPNATTKRYIVTNYASVEVRPYSDFYIISRSQESACTEYINNGLPPIQNTRNVVPVAIVSRSIKPREVQANEDIVVSKTSLWKEMQYNRDIIIRFKFDNSIIKSGGLGYKWAEISFKAANYQYNYMRDGEDVTAHTTCSVNGVNDFSFNGGSLPTDFAISRYEVIKENSYVYVDYWDDSQAFRNMVYVRSLAANLNDVMCSGGHYSFALPAGQWPVMKGGAVTLHTAGVTLSTQFTDYVSLNSLRFRFRLAAEEPSFTITRTRVSKLYGIPAANPNGGREYYEVAGRFSLISLVPSNDDYQTPIMNSVTVRQYLERHLNELREEFNNLSQEIAVSQLIDLAMLPLDMFSMFSGIESTVNAAKSMATNVMRKFKSSKLASSVSMLRDSLSDGASSIARSTSIRSIGSTASAWANISERTQDAVNEVATISSQVSQISGKLRLKEITTQTEGMNFDDVSGAVLKAKIDRSIQVDQNALPDVITEASEKFIRNRAYRVIDGDEAFEAGTDGRFFAYKVETLEEMPFNIEKFADLVTNSPVISAIIDFKTLKNLNDNYGITREQAFNLLRSNPKVLRGFIDQNNPIIKNRIEQLIMQCRL.

Positions 65–224 are spike head; that stretch reads LDGPYQPASF…ACTEYINNGL (160 aa). Positions 248 to 479 are spike body and stalk (antigen domain); the sequence is VQANEDIVVS…LISLVPSNDD (232 aa). Positions 308-310 match the DGE motif; interaction with ITGA2/ITGB1 heterodimer motif; the sequence is DGE. A disulfide bridge links C318 with C380. Positions 389-409 are hydrophobic; possible role in virus entry into host cell; sequence LPAGQWPVMKGGAVTLHTAGV. Residues 491-518 are a coiled coil; sequence RQYLERHLNELREEFNNLSQEIAVSQLI. Residues 510 to 776 are spike foot; the sequence is QEIAVSQLID…IEQLIMQCRL (267 aa). Residues 644 to 646 carry the KID motif; interaction with HSPA8 motif; that stretch reads KID.

This sequence belongs to the rotavirus VP4 family. Homotrimer. VP4 adopts a dimeric appearance above the capsid surface, while forming a trimeric base anchored inside the capsid layer. Only hints of the third molecule are observed above the capsid surface. It probably performs a series of molecular rearrangements during viral entry. Prior to trypsin cleavage, it is flexible. The priming trypsin cleavage triggers its rearrangement into rigid spikes with approximate two-fold symmetry of their protruding parts. After an unknown second triggering event, cleaved VP4 may undergo another rearrangement, in which two VP5* subunits fold back on themselves and join a third subunit to form a tightly associated trimer, shaped like a folded umbrella. Interacts with VP6. Interacts with VP7. In terms of assembly, homotrimer. The trimer is coiled-coil stabilized by its C-terminus, however, its N-terminus, known as antigen domain or 'body', seems to be flexible allowing it to self-associate either as a dimer or a trimer. Post-translationally, proteolytic cleavage by trypsin results in activation of VP4 functions and greatly increases infectivity. The penetration into the host cell is dependent on trypsin treatment of VP4. It produces two peptides, VP5* and VP8* that remain associated with the virion. Cleavage of VP4 by trypsin probably occurs in vivo in the lumen of the intestine prior to infection of enterocytes. Trypsin seems to be incorporated into the three-layered viral particles but remains inactive as long as the viral outer capsid is intact and would only be activated upon the solubilization of the latter.

Its subcellular location is the virion. The protein resides in the host rough endoplasmic reticulum. The protein localises to the host cell membrane. It is found in the host cytoplasm. It localises to the host cytoskeleton. Its subcellular location is the host endoplasmic reticulum-Golgi intermediate compartment. Functionally, spike-forming protein that mediates virion attachment to the host epithelial cell receptors and plays a major role in cell penetration, determination of host range restriction and virulence. Rotavirus attachment and entry into the host cell probably involves multiple sequential contacts between the outer capsid proteins VP4 and VP7, and the cell receptors. It is subsequently lost, together with VP7, following virus entry into the host cell. Following entry into the host cell, low intracellular or intravesicular Ca(2+) concentration probably causes the calcium-stabilized VP7 trimers to dissociate from the virion. This step is probably necessary for the membrane-disrupting entry step and the release of VP4, which is locked onto the virion by VP7. During the virus exit from the host cell, VP4 seems to be required to target the newly formed virions to the host cell lipid rafts. Forms the spike 'foot' and 'body' and acts as a membrane permeabilization protein that mediates release of viral particles from endosomal compartments into the cytoplasm. During entry, the part of VP5* that protrudes from the virus folds back on itself and reorganizes from a local dimer to a trimer. This reorganization may be linked to membrane penetration by exposing VP5* hydrophobic region. In integrin-dependent strains, VP5* targets the integrin heterodimer ITGA2/ITGB1 for cell attachment. In terms of biological role, forms the head of the spikes and mediates the recognition of specific host cell surface glycans. It is the viral hemagglutinin and an important target of neutralizing antibodies. In sialic acid-dependent strains, VP8* binds to host cell sialic acid, most probably a ganglioside, providing the initial contact. In some other strains, VP8* mediates the attachment to histo-blood group antigens (HBGAs) for viral entry. This is Outer capsid protein VP4 from Bos taurus (Bovine).